Reading from the N-terminus, the 152-residue chain is Transcriptional repressor NrdR (152 aa).

The segment at 3-34 (CPKCGSLNDKVVDTRQSKDGTVIRRRRECLDC) is a zinc-finger region. Positions 49–139 (IVVKKKNGTT…VYNEFQDIKD (91 aa)) constitute an ATP-cone domain.

It belongs to the NrdR family. It depends on Zn(2+) as a cofactor.

Its function is as follows. Negatively regulates transcription of bacterial ribonucleotide reductase nrd genes and operons by binding to NrdR-boxes. The protein is Transcriptional repressor NrdR of Persephonella marina (strain DSM 14350 / EX-H1).